We begin with the raw amino-acid sequence, 134 residues long: Profilin-3 (134 aa).

Residues Cys13 and Cys118 are joined by a disulfide bond. Residues 84–100 carry the Involved in PIP2 interaction motif; sequence AVIRGKKGSGGITIKKT. Thr114 bears the Phosphothreonine mark.

Belongs to the profilin family. In terms of assembly, occurs in many kinds of cells as a complex with monomeric actin in a 1:1 ratio. Phosphorylated by MAP kinases.

It is found in the cytoplasm. It localises to the cytoskeleton. Its function is as follows. Binds to actin and affects the structure of the cytoskeleton. At high concentrations, profilin prevents the polymerization of actin, whereas it enhances it at low concentrations. The chain is Profilin-3 from Olea europaea (Common olive).